The sequence spans 525 residues: Keratin, type II cytoskeletal 71 (525 aa).

The segment at Met1–Gln131 is head. The tract at residues Glu132–Leu167 is coil 1A. The region spanning Glu132–Met445 is the IF rod domain. The tract at residues Gln168–Tyr186 is linker 1. The interval Ile187–Ile278 is coil 1B. The tract at residues Gln279–Ile302 is linker 12. The tract at residues Ile303–Glu441 is coil 2. A tail region spans residues Glu442–Arg525. The disordered stretch occupies residues Val492 to Arg525. Residues Gly495–Leu510 are compositionally biased toward basic and acidic residues.

It belongs to the intermediate filament family. In terms of assembly, heterodimer of a type I and a type II keratin. Associates with KRT16 and/or KRT17.

The protein resides in the cytoplasm. It is found in the cytoskeleton. Plays a central role in hair formation. Essential component of keratin intermediate filaments in the inner root sheath (IRS) of the hair follicle. In Bos taurus (Bovine), this protein is Keratin, type II cytoskeletal 71 (KRT71).